The primary structure comprises 379 residues: Forkhead box protein F1 (379 aa).

Residues 1-45 (MSSAPEKQQPPHGGGGGGGGGGGAAMDPASSGPSKAKKTNAGIRR) are disordered. Over residues 12–24 (HGGGGGGGGGGGA) the composition is skewed to gly residues. Positions 47 to 138 (EKPPYSYIAL…EFMFEEGSFR (92 aa)) form a DNA-binding region, fork-head.

In terms of tissue distribution, expressed in lung and placenta.

The protein resides in the nucleus. In terms of biological role, probable transcription activator for a number of lung-specific genes. In Homo sapiens (Human), this protein is Forkhead box protein F1 (FOXF1).